We begin with the raw amino-acid sequence, 248 residues long: Phycocyanobilin:ferredoxin oxidoreductase (248 aa).

This sequence belongs to the HY2 family.

The enzyme catalyses (2R,3Z)-phycocyanobilin + 4 oxidized [2Fe-2S]-[ferredoxin] = biliverdin IXalpha + 4 reduced [2Fe-2S]-[ferredoxin] + 4 H(+). Its function is as follows. Catalyzes the four-electron reduction of biliverdin IX-alpha (2-electron reduction at both the A and D rings); the reaction proceeds via an isolatable 2-electron intermediate, 181,182-dihydrobiliverdin. The protein is Phycocyanobilin:ferredoxin oxidoreductase of Synechococcus sp. (strain ATCC 27144 / PCC 6301 / SAUG 1402/1) (Anacystis nidulans).